The following is a 969-amino-acid chain: Endogenous retrovirus group K member 11 Pol protein (969 aa).

The region spanning 57–245 is the Reverse transcriptase domain; that stretch reads LEKGHIEPSF…TPFHYLGMQI (189 aa). Residues 161–164 carry the LPQG motif; that stretch reads LPQG. Residues 460–590 form the RNase H type-1 domain; the sequence is LENALTVFTD…ADLLVSSALI (131 aa). Aspartate 469, glutamate 497, aspartate 517, and aspartate 582 together coordinate Mg(2+). An Integrase-type zinc finger spans residues 587–628; that stretch reads SALIKAQELHALTHVNAAGLKNKFDVTWKQAKDIVQHCTQCQ. Zn(2+)-binding residues include histidine 596, histidine 600, cysteine 624, and cysteine 627. The Integrase catalytic domain occupies 642 to 803; it reads RGLCPNALWQ…TSAEQHLTGK (162 aa). Residues 811–859 constitute a DNA-binding region (integrase-type); that stretch reads KLIWWKDNKNKTWEIGKVITWGRGFACVSPGENQLPVWIPTRHLKFYNE.

Belongs to the beta type-B retroviral polymerase family. HERV class-II K(HML-2) pol subfamily.

It catalyses the reaction DNA(n) + a 2'-deoxyribonucleoside 5'-triphosphate = DNA(n+1) + diphosphate. The enzyme catalyses Endonucleolytic cleavage to 5'-phosphomonoester.. Its function is as follows. Early post-infection, the reverse transcriptase converts the viral RNA genome into double-stranded viral DNA. The RNase H domain of the reverse transcriptase performs two functions. It degrades the RNA template and specifically removes the RNA primer from the RNA/DNA hybrid. Following nuclear import, the integrase catalyzes the insertion of the linear, double-stranded viral DNA into the host cell chromosome. Endogenous Pol proteins may have kept, lost or modified their original function during evolution. The polypeptide is Endogenous retrovirus group K member 11 Pol protein (ERVK-11) (Homo sapiens (Human)).